The following is an 853-amino-acid chain: MDMQVQRPITSGSRQAPDPYDQYLESRGLYRKHTARDASSLFRVIAEQMYDTQMLHYEIRLECVRFMTLKRRIFEKEIPGDFDSYMQDMSKPKTYGTMTELRAMSCLYRRNVILYEPYNMGTSVVFNRRYAENFRVFFNNENHFDSVYDVEYIERAAICQSIAFKLLYQKLFKLPDVSFAVEIMLHPHTFNWDRFNVEFDDKGYMVRIHCTDGRVFKLDLPGDTNCILENYKLCNFHSTNGNQSINARKGGRLEIKNQEERKASGSSGHEPNDLLPMCPNRLESCVRQLLDDGISPFPYKVAKSMDPYMYRNIEFDCWNDMRKEAKLYNVYINDYNFKVGAKCKVELPNETEMYTCHVQNISKDKNYCHVFVERIGKEIVVPYESLHPLPPDEYRPWSLPFRYHRQMPRLPLPKYAGKANKSSKWKKNKLFEMDQYFEHSKCDLMPYMPVDNCYQGVHIQDDEQRDHNDPEQNDQNPTTEQRDREEPQAQKQHQRTKASRVQPQNSSSSQNQEVSGSAAPPPTQYMNYVPMIPSRPGHLPPPWPASPMAIAEEFPFPISGTPHPPPTEGCVYMPFGGYGPPPPGAVALSGPHPFMPLPSPPLNVTGIGEPRRSLHPNGEDLPVDMVTLRYFYNMGVDLHWRMSHHTPPDELGMFGYHQQNNTDQQAGRTVVIGATEDNLTAVESTPPPSPEVANATEQSPLEKSAYAKRNLNSVKVRGKRPEQLQDIKDSLGPAAFLPTPTPSPSSNGSQFSFYTTPSPHHHLITPPRLLQPPPPPPIFYHKAGPPQLGGAAQGQTPYAWGMPAPVVSPYEVINNYNMDPSAQPQQQQPATLQPAPLSVQSQPAAVYAATRHH.

A disordered region spans residues 1 to 20; sequence MDMQVQRPITSGSRQAPDPY. The OTU domain maps to 29–150; that stretch reads LYRKHTARDA…ENHFDSVYDV (122 aa). Asp-37 is a catalytic residue. Ser-40 acts as the Nucleophile in catalysis. His-143 is an active-site residue. The Tudor domain occupies 336–396; that stretch reads NFKVGAKCKV…HPLPPDEYRP (61 aa). Positions 396-853 are LC domain; the sequence is PWSLPFRYHR…AAVYAATRHH (458 aa). Residues 460–470 are compositionally biased toward basic and acidic residues; sequence QDDEQRDHNDP. Disordered regions lie at residues 460-531, 681-704, 732-794, and 817-853; these read QDDE…YVPM, AVES…LEKS, GPAA…AAQG, and NMDP…TRHH. Low complexity predominate over residues 499-517; it reads SRVQPQNSSSSQNQEVSGS. Over residues 747-758 the composition is skewed to polar residues; that stretch reads NGSQFSFYTTPS. Over residues 769–778 the composition is skewed to pro residues; sequence LLQPPPPPPI. Composition is skewed to low complexity over residues 783–794 and 820–838; these read AGPPQLGGAAQG and PSAQ…APLS.

As to quaternary structure, self aggregates, forming amyloid-like fibrillar helical structures; protein aggregation is mediated by the C-terminal LC domain, is enhanced by RNA binding and is essential for deubiquitinase activity. Interacts (via OTU domain) with bam (via C-terminus); the interaction enhances otu aggregation and deubiquitinase activity. Together with bam interacts with CycA/cyclin-A; the interaction stabilizes CycA by promoting its deubiquitination. Together with bam interacts with Traf6. Interacts with Hrb27C; the interaction is RNA-independent. Associates (via N-terminus) with mRNP complexes; the interaction is weak. In terms of tissue distribution, expressed at high levels in the ovary, at low levels in the brain and fat body, and at moderate levels in the gut.

Its subcellular location is the cytoplasm. It is found in the cell cortex. It localises to the perinuclear region. Its activity is regulated as follows. Activated by protein aggregation, which is mediated by the LC domain and enhanced by RNA binding. Catalytic component of a deubiquitinase complex consisting of bam and otu. The complex deubiquitinates K63-linked polyubiquitinated proteins; this antagonizes the ubiquitination activity of Traf6 and regulates the IMD immune signaling pathway. Otu-bam deubiquitinase activity is regulated by Traf6 dependent immune signaling regulation of bam expression levels; this forms a feedback loop that regulates the IMD immune signaling pathway and balances gut immune activity during aging. The complex deubiquitinates and stabilizes CycA/cyclin-A to regulate CycA-dependent differentiation. Involved in grk mRNA localization to the dorsal anterior region of the oocyte required for dorsal-ventral axis determination; may function as a ribonuclear protein complex together with sqd and Hrb27C. May regulate actin cytoskeleton organization in differentiating cystocytes during fusome maturation; required for efficient nurse cell cytoplasmic dumping during oogenesis. Essential for female fertility; involved in germ cell proliferation and germ cell differentiation. In terms of biological role, involved in the early stages of germ cell proliferation and differentiation during oogenesis. Required for polytene chromosome dispersal in nurse cells during oogenesis. Its function is as follows. Involved in the later stages of germ cell proliferation and differentiation during oogenesis. The chain is Deubiquitinase otu from Drosophila melanogaster (Fruit fly).